The chain runs to 65 residues: Large ribosomal subunit protein bL35 (65 aa).

This sequence belongs to the bacterial ribosomal protein bL35 family.

This Agathobacter rectalis (strain ATCC 33656 / DSM 3377 / JCM 17463 / KCTC 5835 / VPI 0990) (Eubacterium rectale) protein is Large ribosomal subunit protein bL35.